The primary structure comprises 642 residues: Threonine--tRNA ligase (642 aa).

The TGS domain maps to 1 to 61 (MPVITLPDGS…ENDATLAIIT (61 aa)). The catalytic stretch occupies residues 243-534 (DHRKIGKQLD…LTEEFAGFFP (292 aa)). Positions 334, 385, and 511 each coordinate Zn(2+).

This sequence belongs to the class-II aminoacyl-tRNA synthetase family. As to quaternary structure, homodimer. Zn(2+) is required as a cofactor.

It localises to the cytoplasm. It carries out the reaction tRNA(Thr) + L-threonine + ATP = L-threonyl-tRNA(Thr) + AMP + diphosphate + H(+). In terms of biological role, catalyzes the attachment of threonine to tRNA(Thr) in a two-step reaction: L-threonine is first activated by ATP to form Thr-AMP and then transferred to the acceptor end of tRNA(Thr). Also edits incorrectly charged L-seryl-tRNA(Thr). The polypeptide is Threonine--tRNA ligase (Salmonella choleraesuis (strain SC-B67)).